Consider the following 372-residue polypeptide: Adaptive-response sensory kinase SasA (372 aa).

The Histidine kinase domain maps to 147-360 (MVAHELRTPL…CFHFTVPVWQ (214 aa)). At His-150 the chain carries Phosphohistidine; by autocatalysis.

In terms of assembly, homooligomerizes. Interacts with KaiC. Participates in the KaiBC complex, whose core is composed of a KaiC homohexamer and 6 KaiB.

The enzyme catalyses ATP + protein L-histidine = ADP + protein N-phospho-L-histidine.. Member of the two-component regulatory system SasA/RpaA involved in genome-wide circadian gene expression. One of several clock output pathways. Participates in the Kai clock protein complex, the main circadian regulator in cyanobacteria, via its interaction with KaiC. KaiC enhances the autophosphorylation activity of SasA, which then transfers its phosphate group to RpaA to activate it. In addition to its output function, recruits fold-shifted KaiB (KaiB(fs)) to KaiC to cooperatively form the KaiB(6):KaiC(6) complex (independent of SasA kinase activity). Required for robustness of the circadian rhythm of gene expression and is involved in clock output, also required for adaptation to light/dark cycles. This is Adaptive-response sensory kinase SasA from Prochlorococcus marinus (strain MIT 9301).